The chain runs to 327 residues: E3 ubiquitin ligase Rnf121 (327 aa).

The residue at position 2 (A2) is an N-acetylalanine. Transmembrane regions (helical) follow at residues 50–70, 79–99, 100–120, 148–168, and 172–192; these read MHAE…LLLV, SYNM…TVKL, HWWR…FVTF, ATGI…NLLF, and PEDA…YGVL. An RING-type; atypical zinc finger spans residues 226–276; it reads CAVCGQQIFVDVNEEGIIENTYRLSCNHVFHEFCIRGWCIVGKKQTCPYCK. Residues 306-326 form a helical membrane-spanning segment; sequence LVAWQPVIIGLVQGISYILGL.

It belongs to the RNF121 family.

Its subcellular location is the endoplasmic reticulum membrane. The enzyme catalyses S-ubiquitinyl-[E2 ubiquitin-conjugating enzyme]-L-cysteine + [acceptor protein]-L-lysine = [E2 ubiquitin-conjugating enzyme]-L-cysteine + N(6)-ubiquitinyl-[acceptor protein]-L-lysine.. The protein operates within protein modification; protein ubiquitination. E3 ubiquitin ligase which accepts ubiquitin and transfers it to substrates thereby promoting their degradation by the endoplasmic reticulum-associated degradation (ERAD) pathway which is a pathway involved in ubiquitin-dependent degradation of misfolded endoplasmic reticulum proteins. May regulate the unfolded protein response to reduce endoplasmic reticulum stress. This chain is E3 ubiquitin ligase Rnf121 (Rnf121), found in Mus musculus (Mouse).